Consider the following 235-residue polypeptide: Ubiquinone/menaquinone biosynthesis C-methyltransferase UbiE (235 aa).

Residues Thr-60, Asp-81, and Ser-126 each contribute to the S-adenosyl-L-methionine site.

This sequence belongs to the class I-like SAM-binding methyltransferase superfamily. MenG/UbiE family.

It catalyses the reaction a 2-demethylmenaquinol + S-adenosyl-L-methionine = a menaquinol + S-adenosyl-L-homocysteine + H(+). It carries out the reaction a 2-methoxy-6-(all-trans-polyprenyl)benzene-1,4-diol + S-adenosyl-L-methionine = a 5-methoxy-2-methyl-3-(all-trans-polyprenyl)benzene-1,4-diol + S-adenosyl-L-homocysteine + H(+). It functions in the pathway quinol/quinone metabolism; menaquinone biosynthesis; menaquinol from 1,4-dihydroxy-2-naphthoate: step 2/2. The protein operates within cofactor biosynthesis; ubiquinone biosynthesis. Methyltransferase required for the conversion of demethylmenaquinol (DMKH2) to menaquinol (MKH2) and the conversion of 2-polyprenyl-6-methoxy-1,4-benzoquinol (DDMQH2) to 2-polyprenyl-3-methyl-6-methoxy-1,4-benzoquinol (DMQH2). The polypeptide is Ubiquinone/menaquinone biosynthesis C-methyltransferase UbiE (Geobacter sp. (strain M21)).